The following is a 473-amino-acid chain: Uronate isomerase (473 aa).

Belongs to the metallo-dependent hydrolases superfamily. Uronate isomerase family.

The enzyme catalyses D-glucuronate = D-fructuronate. It catalyses the reaction aldehydo-D-galacturonate = keto-D-tagaturonate. Its pathway is carbohydrate metabolism; pentose and glucuronate interconversion. The sequence is that of Uronate isomerase (uxaC) from Bacillus subtilis (strain 168).